The primary structure comprises 207 residues: uncharacterized protein (207 aa).

Catalysis depends on charge relay system residues S119 and H160.

The protein belongs to the peptidase S51 family.

This is an uncharacterized protein from Pasteurella multocida (strain Pm70).